Reading from the N-terminus, the 309-residue chain is Elongation factor Ts (309 aa).

The involved in Mg(2+) ion dislocation from EF-Tu stretch occupies residues Thr-82 to Val-85.

The protein belongs to the EF-Ts family.

The protein resides in the cytoplasm. Functionally, associates with the EF-Tu.GDP complex and induces the exchange of GDP to GTP. It remains bound to the aminoacyl-tRNA.EF-Tu.GTP complex up to the GTP hydrolysis stage on the ribosome. This is Elongation factor Ts from Rickettsia felis (strain ATCC VR-1525 / URRWXCal2) (Rickettsia azadi).